The following is an 81-amino-acid chain: Bursicon (81 aa).

Heterodimer of burs and pburs. Central nervous system. Coexpressed with CCAP in most CCAP-specific neurons. Coexpressed with pburs in the large bilateral lateral neurosecretory neurons of the first three unfused abdominal ganglia and in all anterior bilateral cell pairs in the thoracic ganglia.

It localises to the secreted. In terms of biological role, final heterodimeric neurohormone released at the end of the molting cycle, involved in the sclerotization (tanning) of the insect cuticle, melanization and wing spreading. This chain is Bursicon (burs), found in Periplaneta americana (American cockroach).